The following is a 413-amino-acid chain: MDTNSKTKVQTENKKIKAKFIHNHGQKPSLIQITPPMISSTLFHAYPLLLIFDNALANIMWLSDDKCLTFIYLTSIWLTISFFIPVETEASHFLPFTKILRLWLGIISGAFLFLSFMYYIVSLIASLRDTEPPTLDEIVVLLESVLDKLEVLRNELNVWKKLKLSFDGVNKECSGKRLFCRLFLFGTIFQIIIMRYISPGTYTRFFIITGLIYNTSSFQATLRLLWRFTAVRNFYYLGIESFKISSFLPKHLKMEQIIPLSQGRAITVPLVEVLPKLLRDKKGDDHIHILQLLLNEQKDNFGNEDLKILEIEVYENQRRWYQNKNWSTKLLPYERQNYCIEIKNTDGTLTMRSCLPPDGLGEEELPNNWHWINDNWDGTDWIYSDSAWKEIGQYSSLESFTRSRKWKRRLFHL.

The Peroxisomal portion of the chain corresponds to 1–66; the sequence is MDTNSKTKVQ…ANIMWLSDDK (66 aa). A helical membrane pass occupies residues 67–87; sequence CLTFIYLTSIWLTISFFIPVE. The Cytoplasmic portion of the chain corresponds to 88–103; it reads TEASHFLPFTKILRLW. A helical membrane pass occupies residues 104–124; sequence LGIISGAFLFLSFMYYIVSLI. At 125–181 the chain is on the peroxisomal side; that stretch reads ASLRDTEPPTLDEIVVLLESVLDKLEVLRNELNVWKKLKLSFDGVNKECSGKRLFCR. Residues 182–202 form a helical membrane-spanning segment; it reads LFLFGTIFQIIIMRYISPGTY. Over 203-413 the chain is Cytoplasmic; it reads TRFFIITGLI…RKWKRRLFHL (211 aa).

This sequence belongs to the PEX28-32 family. PEX32 subfamily.

Its subcellular location is the peroxisome membrane. The sequence is that of Peroxisomal membrane protein PEX32 (PEX32) from Saccharomyces cerevisiae (strain ATCC 204508 / S288c) (Baker's yeast).